The following is a 561-amino-acid chain: Magnesium-chelatase 60 kDa subunit (561 aa).

Disordered regions lie at residues 234 to 268 (PLQEAPPPPPPPPEPPEPNEGENQQDEQDQIDPLD) and 298 to 324 (RAASGGQGAGQEQIGNRRGRPLPSRKG). The span at 237–249 (EAPPPPPPPPEPP) shows a compositional bias: pro residues. A compositionally biased stretch (acidic residues) spans 250 to 265 (EPNEGENQQDEQDQID). The segment covering 314–323 (RRGRPLPSRK) has biased composition (basic residues). Positions 379–559 (VLIFAVDASG…KMADVLGAAL (181 aa)) constitute a VWFA domain.

It belongs to the Mg-chelatase subunits D/I family.

The catalysed reaction is protoporphyrin IX + Mg(2+) + ATP + H2O = Mg-protoporphyrin IX + ADP + phosphate + 3 H(+). It functions in the pathway porphyrin-containing compound metabolism; bacteriochlorophyll biosynthesis. Involved in bacteriochlorophyll biosynthesis; introduces a magnesium ion into protoporphyrin IX to yield Mg-protoporphyrin IX. The polypeptide is Magnesium-chelatase 60 kDa subunit (bchD) (Rhodobacter capsulatus (strain ATCC BAA-309 / NBRC 16581 / SB1003)).